We begin with the raw amino-acid sequence, 231 residues long: Large ribosomal subunit protein uL1 (231 aa).

This sequence belongs to the universal ribosomal protein uL1 family. In terms of assembly, part of the 50S ribosomal subunit.

In terms of biological role, binds directly to 23S rRNA. The L1 stalk is quite mobile in the ribosome, and is involved in E site tRNA release. Its function is as follows. Protein L1 is also a translational repressor protein, it controls the translation of the L11 operon by binding to its mRNA. The chain is Large ribosomal subunit protein uL1 from Pseudomonas aeruginosa (strain LESB58).